The chain runs to 563 residues: Solute carrier family 22 member 1 (563 aa).

The Cytoplasmic segment spans residues 1-21; the sequence is MLTVDDVLEQVGEFGWFQKQT. A helical transmembrane segment spans residues 22-42; it reads FLILCLLSAAFAPIYVGIVFL. Over 43–144 the chain is Extracellular; sequence AFTPDHRCRS…LVCDDSWKVD (102 aa). Residue N71 is glycosylated (N-linked (GlcNAc...) asparagine). A helical transmembrane segment spans residues 145-165; sequence LFQSCVNLGFFLGSLGVGYIA. The Cytoplasmic segment spans residues 166–171; sequence DRFGRK. Residues 172–192 form a helical membrane-spanning segment; the sequence is VCLLATTLTCASLGVLTAVAP. The Extracellular portion of the chain corresponds to 193–196; sequence DYTS. Residues 197 to 219 form a helical membrane-spanning segment; the sequence is LLIFRLLQGLVSKGSWTAGYTLI. The Cytoplasmic portion of the chain corresponds to 220 to 232; the sequence is TEFVGLGYRRTVA. A helical transmembrane segment spans residues 233-253; it reads ILYQMAFTVGLVLLSGLAYIL. Residues 254–257 are Extracellular-facing; that stretch reads PHWR. Residues 258–278 form a helical membrane-spanning segment; it reads WLQLAVSLPIFLLLFRFWFVP. Positions 278–282 match the Proline-rich sequence motif; sequence PESPR. At 279–342 the chain is on the cytoplasmic side; sequence ESPRWLLSQK…FRTPNLRKYT (64 aa). S328 carries the phosphoserine modification. A helical membrane pass occupies residues 343-363; that stretch reads FILMYLWFTSSVVYQGLIMHV. The Extracellular portion of the chain corresponds to 364 to 371; that stretch reads GATGGNLY. A helical membrane pass occupies residues 372–392; the sequence is LDFLYSALVEFPAGFIILVTI. The Cytoplasmic portion of the chain corresponds to 393-398; the sequence is DRFGRR. A helical membrane pass occupies residues 399 to 418; sequence YPLATSNLAAGLACFLMIFI. The Extracellular portion of the chain corresponds to 419 to 423; it reads PHDLP. Residues 424-446 traverse the membrane as a helical segment; sequence WLNIMVACVGRMGITIVFQMVCL. Topologically, residues 447 to 459 are cytoplasmic; sequence VNAELFPTFIRNL. The chain crosses the membrane as a helical span at residues 460–480; it reads GMMVCSSLCDLGGVLTPFLVF. The Extracellular portion of the chain corresponds to 481–487; the sequence is RLMEVWQ. Residues 488–508 form a helical membrane-spanning segment; that stretch reads GSPLILFAALGLVAGGMTLLL. Over 509-563 the chain is Cytoplasmic; that stretch reads PETKGVTLPETIEDAENLQRKAKPKENKIYLQVQTSELNTQAAERDASQGTAQQK.

It belongs to the major facilitator (TC 2.A.1) superfamily. Organic cation transporter (TC 2.A.1.19) family. Phosphorylated.

The protein localises to the basolateral cell membrane. Its subcellular location is the apical cell membrane. The protein resides in the lateral cell membrane. It is found in the basal cell membrane. It localises to the cell membrane. The catalysed reaction is 1-methylnicotinamide(out) = 1-methylnicotinamide(in). It carries out the reaction dopamine(out) = dopamine(in). The enzyme catalyses serotonin(out) = serotonin(in). It catalyses the reaction (R)-adrenaline(out) = (R)-adrenaline(in). The catalysed reaction is (R)-noradrenaline(out) = (R)-noradrenaline(in). It carries out the reaction histamine(out) = histamine(in). The enzyme catalyses guanidine(out) = guanidine(in). It catalyses the reaction choline(out) = choline(in). The catalysed reaction is acetylcholine(in) = acetylcholine(out). It carries out the reaction thiamine(in) = thiamine(out). The enzyme catalyses spermidine(in) = spermidine(out). It catalyses the reaction agmatine(out) = agmatine(in). The catalysed reaction is putrescine(out) = putrescine(in). It carries out the reaction (R)-carnitine(in) = (R)-carnitine(out). The enzyme catalyses O-isobutanoyl-(R)-carnitine(in) = O-isobutanoyl-(R)-carnitine(out). It catalyses the reaction O-acetyl-(R)-carnitine(in) = O-acetyl-(R)-carnitine(out). The catalysed reaction is O-3-hydroxybutanoyl-(R)-carnitine(in) = O-3-hydroxybutanoyl-(R)-carnitine(out). It carries out the reaction O-propanoyl-(R)-carnitine(in) = O-propanoyl-(R)-carnitine(out). The enzyme catalyses O-butanoyl-(R)-carnitine(in) = O-butanoyl-(R)-carnitine(out). It catalyses the reaction O-2-methylbutanoyl-(R)-carnitine(in) = O-2-methylbutanoyl-(R)-carnitine(out). The catalysed reaction is O-3-methylbutanoyl-(R)-carnitine(in) = O-3-methylbutanoyl-(R)-carnitine(out). It carries out the reaction O-hexanoyl-(R)-carnitine(in) = O-hexanoyl-(R)-carnitine(out). The enzyme catalyses L-histidyl-L-proline diketopiperazine(in) = L-histidyl-L-proline diketopiperazine(out). It catalyses the reaction (R)-salsolinol(in) = (R)-salsolinol(out). The catalysed reaction is prostaglandin F2alpha(out) = prostaglandin F2alpha(in). It carries out the reaction prostaglandin E2(out) = prostaglandin E2(in). Its activity is regulated as follows. Phosphorylation of the transporter leads to changes in its substrate affinity, resulting in a regulation of the transport activity. In contrast with rat ortholog, ASP uptake is inhibited by protein kinase A (PKA) and C (PKC) activation. ASP uptake is also endogenously activated by calmodulin, the calmodulin-dependent kinase II and LCK tyrosine kinase. Inhibited by cGMP, most likely through a cGMP-binding protein that interacts with OCT1. Functionally, electrogenic voltage-dependent transporter that mediates the transport of a variety of organic cations such as endogenous bioactive amines, cationic drugs and xenobiotics. Functions as a pH- and Na(+)-independent, bidirectional transporter. Cation cellular uptake or release is driven by the electrochemical potential (i.e. membrane potential and concentration gradient) and substrate selectivity. Hydrophobicity is a major requirement for recognition in polyvalent substrates and inhibitors. Primarily expressed in the basolateral membrane of hepatocytes and proximal tubules and involved in the uptake and disposition of cationic compounds from the blood by hepatic and renal clearance. Most likely functions as an uptake carrier in enterocytes contributing to the intestinal elimination of organic cations from the systemic circulation. Transports endogenous monoamines such as N-1-methylnicotinamide (NMN), guanidine, neurotransmitters dopamine, serotonin, noradrenaline, adrenaline and histamine, and quaternary ammonium compound such as choline. Also transports natural polyamines such as spermidine, agmatine and putrescine at low affinity, but relatively high turnover. Involved in the hepatic and intestinal uptake of the vitamin B1/thiamine, hence regulating hepatic lipid and energy metabolism. Contributes to the influx and efflux of fatty acid carriers carnitines and acylcarnitines across the basolateral membrane of hepatocytes, from the liver to the systemic circulation and inversely and may be involved in regulating the systemic availability of hepatic acylcarnitines. Also capable of transporting non-amine endogenous compounds such as prostaglandin E2 (PGE2) and prostaglandin F2-alpha (PGF2-alpha). May contribute to the transport of cationic compounds in testes across the blood-testis-barrier. Also mediates the uptake of xenobiotics tributylmethylammonium (TBuMA), quinidine, N-methyl-quinine (NMQ), N-methyl-quinidine (NMQD) N-(4,4-azo-n-pentyl)-quinuclidine (APQ), azidoprocainamide methoiodide (AMP), N-(4,4-azo-n-pentyl)-21-deoxyajmalinium (APDA) and 4-(4-(dimethylamino)styryl)-N-methylpyridinium (ASP). In Bos taurus (Bovine), this protein is Solute carrier family 22 member 1 (SLC22A1).